We begin with the raw amino-acid sequence, 1383 residues long: DNA-directed RNA polymerase subunit beta (1383 aa).

Belongs to the RNA polymerase beta chain family. As to quaternary structure, the RNAP catalytic core consists of 2 alpha, 1 beta, 1 beta' and 1 omega subunit. When a sigma factor is associated with the core the holoenzyme is formed, which can initiate transcription.

The catalysed reaction is RNA(n) + a ribonucleoside 5'-triphosphate = RNA(n+1) + diphosphate. Its function is as follows. DNA-dependent RNA polymerase catalyzes the transcription of DNA into RNA using the four ribonucleoside triphosphates as substrates. This chain is DNA-directed RNA polymerase subunit beta, found in Xanthomonas axonopodis pv. citri (strain 306).